We begin with the raw amino-acid sequence, 945 residues long: MQAAPCARRLARRSHSALLAALTVLLLQTLVVWNFSSLDSGAGERRGGAAVGGGEQPPPAPRRERRDLPAEPAAARGGGGGGGGCGGGGRGPQARARGGGPGEPRGQQPASRGALPARALDGYFSHRPKEKVRTDSNNENSVPKDFENVDNSNFAPRTQKQKHQPELAKKPPSRQKELLKRKLEQQEKGKGHTFPGKGPGEVLPPGDRAAANSSHGKDVSRPPHARKTGGSSPETKYDQPPKCDISGKEAISALSRAKSKHCRQEIGETYCRHKLGLLMPEKVTRFCPLEGKANKNVQWDEDSVEYMPANPVRIAFVLVVHGRASRQLQRMFKAIYHKDHFYYIHVDKRSNYLHRQVLQVSRQYSNVRVTPWRMATIWGGASLLSTYLQSMRDLLEMTDWPWDFFINLSAADYPIRTNDQLVAFLSRYRDMNFLKSHGRDNARFIRKQGLDRLFLECDAHMWRLGDRRIPEGIAVDGGSDWFLLNRRFVEYVTFSTDDLVTKMKQFYSYTLLPAESFFHTVLENSPHCDTMVDNNLRITNWNRKLGCKCQYKHIVDWCGCSPNDFKPQDFHRFQQTARPTFFARKFEAVVNQEIIGQLDYYLYGNYPAGTPGLRSYWENVYDEPDGIHSLSDVTLTLYHSFARLGLRRAETSLHTDGENSCRYYPMGHPASVHLYFLADRFQGFLIKHHATNLAVSKLETLETWVMPKKVFKIASPPSDFGRLQFSEVGTDWDAKERLFRNFGGLLGPMDEPVGMQKWGKGPNVTVTVIWVDPVNVIAATYDILIESTAEFTHYKPPLNLPLRPGVWTVKILHHWVPVAETKFLVAPLTFSNRQPIKPEEALKLHNGPLRNAYMEQSFQSLNPVLSLPISPAQVEQARRNAASTGTALEGWLDSLVGGMWTAMDICATGPTACPVMQTCSQTAWSSFSPDPKSELGAVKPDGRLR.

Over 1–17 (MQAAPCARRLARRSHSA) the chain is Cytoplasmic. Residues 18 to 38 (LLAALTVLLLQTLVVWNFSSL) form a helical; Signal-anchor for type II membrane protein membrane-spanning segment. Topologically, residues 39–945 (DSGAGERRGG…GAVKPDGRLR (907 aa)) are lumenal. Positions 42 to 245 (AGERRGGAAV…KYDQPPKCDI (204 aa)) are disordered. Residues 76-103 (RGGGGGGGGCGGGGRGPQARARGGGPGE) are compositionally biased toward gly residues. A compositionally biased stretch (basic and acidic residues) spans 131-147 (KVRTDSNNENSVPKDFE). Polar residues predominate over residues 149-158 (VDNSNFAPRT). Over residues 163-190 (HQPELAKKPPSRQKELLKRKLEQQEKGK) the composition is skewed to basic and acidic residues. Asparagine 212 carries N-linked (GlcNAc...) asparagine glycosylation. Over residues 235–245 (TKYDQPPKCDI) the composition is skewed to basic and acidic residues. Disulfide bonds link cysteine 243/cysteine 271, cysteine 287/cysteine 528, cysteine 547/cysteine 560, and cysteine 549/cysteine 558. UDP-alpha-D-xylose-binding positions include valine 319, aspartate 347, and 376–378 (TIW). Asparagine 407 carries an N-linked (GlcNAc...) asparagine glycan. 480 to 481 (DW) contacts UDP-alpha-D-xylose. UDP-alpha-D-xylose-binding positions include serine 561 and 584–585 (RK). Cystine bridges form between cysteine 661-cysteine 913 and cysteine 906-cysteine 919. Asparagine 763 carries N-linked (GlcNAc...) asparagine glycosylation. Positions 926 to 945 (SFSPDPKSELGAVKPDGRLR) are disordered.

Belongs to the glycosyltransferase 14 family. XylT subfamily. In terms of assembly, monomer. The cofactor is a divalent metal cation. Contains 7 disulfide bonds. Post-translationally, N-glycosylated.

The protein localises to the golgi apparatus membrane. It catalyses the reaction UDP-alpha-D-xylose + L-seryl-[protein] = 3-O-(beta-D-xylosyl)-L-seryl-[protein] + UDP + H(+). The protein operates within glycan metabolism; chondroitin sulfate biosynthesis. Its pathway is glycan metabolism; heparan sulfate biosynthesis. Catalyzes the first step in the biosynthesis of chondroitin sulfate and dermatan sulfate proteoglycans, such as DCN. Transfers D-xylose from UDP-D-xylose to specific serine residues of the core protein. Required for normal maturation of chondrocytes during bone development, normal onset of ossification and normal embryonic and postnatal skeleton development, especially of the long bones. This is Xylosyltransferase 1 (XYLT1) from Pan troglodytes (Chimpanzee).